Consider the following 243-residue polypeptide: Transmembrane protein 174 (243 aa).

2 consecutive transmembrane segments (helical) span residues 40-60 and 73-93; these read LLFS…MGWI and LLGP…VCKF.

In terms of assembly, interacts with SLC34A1; regulates SLC34A1 internalization by PTH and FGF23. In terms of tissue distribution, predominantly expressed in kidney. Selectively localized in the apical membrane of renal proximal tubule epithelial cells.

It localises to the endoplasmic reticulum membrane. The protein resides in the apical cell membrane. Functionally, regulator of plasma phosphate homeostasis. Decreases serum inorganic phosphate (Pi) uptake by regulating the sodium-phosphate cotransporter SLC34A1 trafficking by PTH and FGF23 in the kidney. The chain is Transmembrane protein 174 (TMEM174) from Homo sapiens (Human).